The chain runs to 103 residues: Large ribosomal subunit protein bL21 (103 aa).

The protein belongs to the bacterial ribosomal protein bL21 family. Part of the 50S ribosomal subunit. Contacts protein L20.

This protein binds to 23S rRNA in the presence of protein L20. This is Large ribosomal subunit protein bL21 from Lactobacillus delbrueckii subsp. bulgaricus (strain ATCC 11842 / DSM 20081 / BCRC 10696 / JCM 1002 / NBRC 13953 / NCIMB 11778 / NCTC 12712 / WDCM 00102 / Lb 14).